The primary structure comprises 218 residues: Serine/threonine-protein phosphatase 2 (218 aa).

Mn(2+) contacts are provided by Asp-22, His-24, Asp-51, and Asn-77. The Proton donor role is filled by His-78. His-187 serves as a coordination point for Mn(2+).

This sequence belongs to the PPP phosphatase family. Mn(2+) serves as cofactor.

It catalyses the reaction O-phospho-L-seryl-[protein] + H2O = L-seryl-[protein] + phosphate. The catalysed reaction is O-phospho-L-threonyl-[protein] + H2O = L-threonyl-[protein] + phosphate. Functionally, has been shown, in vitro, to act on Ser, Thr and Tyr-phosphorylated substrates. The chain is Serine/threonine-protein phosphatase 2 (pphB) from Escherichia coli (strain K12).